Reading from the N-terminus, the 730-residue chain is Synaptogenesis protein syg-1 (730 aa).

An N-terminal signal peptide occupies residues 1 to 18; the sequence is MVRWQTWPLLLLFQLVTC. At 19 to 551 the chain is on the extracellular side; sequence QQLQQRIVEA…WIVITAKFDR (533 aa). 5 consecutive Ig-like domains span residues 23–123, 131–265, 270–352, 357–433, and 441–540; these read QRIV…AKLT, PKIV…VKLS, PQIN…IKLN, ARIM…QILS, and PPTV…RNIL. 5 cysteine pairs are disulfide-bonded: Cys-44–Cys-104, Cys-152–Cys-246, Cys-292–Cys-336, Cys-378–Cys-420, and Cys-462–Cys-519. N-linked (GlcNAc...) asparagine glycosylation is found at Asn-93 and Asn-206. The helical transmembrane segment at 552–572 threads the bilayer; sequence MVALAIISAGVLLVSLLCCLC. At 573-730 the chain is on the cytoplasmic side; sequence MCRSNCRSRK…RPISRTSTHV (158 aa).

This sequence belongs to the immunoglobulin superfamily. As to quaternary structure, interacts with skr-1. Interacts with syg-2. Interacts with the WAVE regulatory complex; the interaction leads to formation of a synaptic F-actin network that is required for synapse formation and axon branching. In terms of tissue distribution, expression in head motor neurons, occasionally in HSN neurons and weakly in other cells in the vulval region. Expressed in the primary synapse region of HSNL motor neuron.

It is found in the cell membrane. It localises to the cell projection. Its subcellular location is the axon. The protein localises to the synapse. Cell adhesion protein. Involved in synapse formation in the HSNL egg-laying motor neuron. Inhibits assembly of the SCF(sel-10) E3 ubiquitin ligase complex at synapses, and protects them from elimination. Also required for F-actin assembly at the synaptic region and for axon branch formation. This chain is Synaptogenesis protein syg-1, found in Caenorhabditis elegans.